The primary structure comprises 600 residues: PWWP domain-containing protein 2B (600 aa).

5 disordered regions span residues 81 to 115 (ETGPLHPHHKDPEKDQPPKTAVSEPPPPLIPPVPA), 143 to 171 (WVPQPPPRTIKRTRRRLSRNRDPGRLILS), 186 to 350 (KSTV…LGDG), 366 to 408 (GCPR…PQGK), and 426 to 477 (DCTS…TVPP). The span at 104 to 115 (EPPPPLIPPVPA) shows a compositional bias: pro residues. Residues 151-160 (TIKRTRRRLS) are compositionally biased toward basic residues. Polar residues predominate over residues 187-200 (STVSPQEASPSPLN). Phosphoserine occurs at positions 190 and 210. The segment covering 239 to 252 (EKREEDRVAGERVP) has biased composition (basic and acidic residues). Serine 254 bears the Phosphoserine mark. Polar residues predominate over residues 286–297 (PQQSLQNGSQDS). Residues 298–309 (EVSRDVEPRGGG) are compositionally biased toward basic and acidic residues. Residues 328–339 (PVPPISDLPPPK) are compositionally biased toward pro residues. The span at 381–395 (DGSSHGLEDLSSGSS) shows a compositional bias: low complexity. Residues 443–456 (SSGSEVTSPDTGDL) are compositionally biased toward polar residues. Serine 457 is modified (phosphoserine). Residues 457-468 (SSGDSASVPSSS) show a composition bias toward low complexity. The PWWP domain occupies 500 to 560 (VGDIVWGKIH…ISKLSPFSEF (61 aa)).

Component of a MTA1-specific subcomplex of the NuRD complex composed of PWWP2B, MTA1 and HDAC1 but does not contain CHD4 and MBD3. Interacts with MTA1, MTA2, MTA3, HDAC1, HDAC2, RBBP4, RBBP7, BRCC3 and ZNF516. Does not interact with CHD4 and MBD3. In terms of processing, deubiquitinated by BRCC3; leading to its stabilization. In terms of tissue distribution, expressed in the brown adipose tissue.

The protein resides in the nucleus. Functionally, chromatin-binding protein that acts as an adapter between distinct nucleosome components (H3K36me3 or H2A.Z) and chromatin-modifying complexes, contributing to the regulation of the levels of histone acetylation at actively transcribed genes. Competes with CHD4 and MBD3 for interaction with MTA1 to form a NuRD subcomplex, preventing the formation of full NuRD complex (containing CHD4 and MBD3), leading to recruitment of HDACs to gene promoters resulting in turn in the deacetylation of nearby H3K27 and H2A.Z. Plays a role in facilitating transcriptional elongation through regulation of histone acetylation. Negatively regulates brown adipocyte thermogenesis by interacting with and stabilizing HDAC1 at the UCP1 gene promoter, thereby promoting histone deacetylation at the promoter leading to the repression of UCP1 expression. This chain is PWWP domain-containing protein 2B (Pwwp2b), found in Mus musculus (Mouse).